The sequence spans 436 residues: Protein arginine methyltransferase NDUFAF7, mitochondrial (436 aa).

The N-terminal 41 residues, 1–41 (MNALVRRCVARAGLPCIWRGKCYSSGNEPAESNQVTPMLRH), are a transit peptide targeting the mitochondrion. Positions 411 to 436 (GSQERNACQSKTPSSSVAGFDELVWQ) are disordered. Over residues 413–427 (QERNACQSKTPSSSV) the composition is skewed to polar residues.

The protein belongs to the NDUFAF7 family. Interacts with NDUFS2.

The protein localises to the mitochondrion. It carries out the reaction L-arginyl-[protein] + 2 S-adenosyl-L-methionine = N(omega),N(omega)'-dimethyl-L-arginyl-[protein] + 2 S-adenosyl-L-homocysteine + 2 H(+). Arginine methyltransferase involved in the assembly or stability of mitochondrial NADH:ubiquinone oxidoreductase complex (complex I). Acts by mediating symmetric dimethylation of 'Arg-118' of NDUFS2 after it assembles into the complex I, stabilizing the early intermediate complex. This Mus musculus (Mouse) protein is Protein arginine methyltransferase NDUFAF7, mitochondrial.